A 353-amino-acid polypeptide reads, in one-letter code: Chorismate synthase (353 aa).

Residues arginine 48 and arginine 54 each contribute to the NADP(+) site. FMN contacts are provided by residues 125–127 (RSS), 238–239 (NA), glycine 278, 293–297 (KPTSS), and arginine 319.

This sequence belongs to the chorismate synthase family. In terms of assembly, homotetramer. It depends on FMNH2 as a cofactor.

The catalysed reaction is 5-O-(1-carboxyvinyl)-3-phosphoshikimate = chorismate + phosphate. The protein operates within metabolic intermediate biosynthesis; chorismate biosynthesis; chorismate from D-erythrose 4-phosphate and phosphoenolpyruvate: step 7/7. Functionally, catalyzes the anti-1,4-elimination of the C-3 phosphate and the C-6 proR hydrogen from 5-enolpyruvylshikimate-3-phosphate (EPSP) to yield chorismate, which is the branch point compound that serves as the starting substrate for the three terminal pathways of aromatic amino acid biosynthesis. This reaction introduces a second double bond into the aromatic ring system. This Buchnera aphidicola subsp. Schizaphis graminum (strain Sg) protein is Chorismate synthase.